The primary structure comprises 565 residues: MSEQKLALNEYLKTDSDYLRGTIKEGLDSSVTGSFSDGDQQLIKFHGFYQQDDRDLRNERKEQKLEPLYSFMLRARVPGGICSPQQWLGVDKIASTLTSSNSIRLTTRQTFQYHGIPKRNLKTIIQDLDRQALDSIAACGDVNRNVMCNPNPVESKLHEQAYAVAKKLSDHLLPHTRAYAEIWLDEEKLLTTEDETVEPVYGKTYLPRKFKMAVAVPPDNDVDVYTNDLGFIAVAENGELVGFNLTAGGGMGSTHGEVETFPRLADDFGFIKTEDVMKFAEAVMTVQRDWGNRSNRKRSRLKYTIVDHGYEKFKAEVEARAGVKFEPKREVVIGDRGDRYGWVEGVDGKWHLTLFIESGRIKDLPGQTLQTGLREIAKIHKGDFRMTSNQNMIIAGVAAEDKATIEGLARKHGLLGQVLTQTRGHSIACVALPTCPLAMAEAERYFPEFIDHIDALQAKHGISEQAIVVRMTGCPNGCARPFAAEIGLVGKAPGRYNLYLGASFEGTRLNKMHRENIQEADILAELDTLFGRYAVERDAGETFGNFTVRVGVVKAVIDAAKDFHG.

The [4Fe-4S] cluster site is built by cysteine 429, cysteine 435, cysteine 474, and cysteine 478. Cysteine 478 serves as a coordination point for siroheme.

This sequence belongs to the nitrite and sulfite reductase 4Fe-4S domain family. Alpha(8)-beta(8). The alpha component is a flavoprotein, the beta component is a hemoprotein. Siroheme serves as cofactor. It depends on [4Fe-4S] cluster as a cofactor.

It catalyses the reaction hydrogen sulfide + 3 NADP(+) + 3 H2O = sulfite + 3 NADPH + 4 H(+). Its pathway is sulfur metabolism; hydrogen sulfide biosynthesis; hydrogen sulfide from sulfite (NADPH route): step 1/1. Its function is as follows. Component of the sulfite reductase complex that catalyzes the 6-electron reduction of sulfite to sulfide. This is one of several activities required for the biosynthesis of L-cysteine from sulfate. The protein is Sulfite reductase [NADPH] hemoprotein beta-component of Shewanella putrefaciens (strain CN-32 / ATCC BAA-453).